The sequence spans 328 residues: Mannitol-1-phosphate 5-dehydrogenase (328 aa).

NAD(+) is bound at residue 3–14; it reads LIHFGAGNIGCG.

Belongs to the mannitol dehydrogenase family.

The catalysed reaction is D-mannitol 1-phosphate + NAD(+) = beta-D-fructose 6-phosphate + NADH + H(+). The sequence is that of Mannitol-1-phosphate 5-dehydrogenase (mtlD) from Mycoplasma mycoides subsp. mycoides SC (strain CCUG 32753 / NCTC 10114 / PG1).